We begin with the raw amino-acid sequence, 764 residues long: 1,4-alpha-glucan branching enzyme GlgB (764 aa).

The Nucleophile role is filled by D434. E487 serves as the catalytic Proton donor.

It belongs to the glycosyl hydrolase 13 family. GlgB subfamily. In terms of assembly, monomer.

The catalysed reaction is Transfers a segment of a (1-&gt;4)-alpha-D-glucan chain to a primary hydroxy group in a similar glucan chain.. It participates in glycan biosynthesis; glycogen biosynthesis. Functionally, catalyzes the formation of the alpha-1,6-glucosidic linkages in glycogen by scission of a 1,4-alpha-linked oligosaccharide from growing alpha-1,4-glucan chains and the subsequent attachment of the oligosaccharide to the alpha-1,6 position. In Trichormus variabilis (strain ATCC 29413 / PCC 7937) (Anabaena variabilis), this protein is 1,4-alpha-glucan branching enzyme GlgB.